Reading from the N-terminus, the 186-residue chain is Peptidyl-tRNA hydrolase (186 aa).

Tyr14 contributes to the tRNA binding site. Residue His19 is the Proton acceptor of the active site. The tRNA site is built by Tyr64, Asn66, and Asn112.

The protein belongs to the PTH family. Monomer.

It localises to the cytoplasm. The enzyme catalyses an N-acyl-L-alpha-aminoacyl-tRNA + H2O = an N-acyl-L-amino acid + a tRNA + H(+). Its function is as follows. Hydrolyzes ribosome-free peptidyl-tRNAs (with 1 or more amino acids incorporated), which drop off the ribosome during protein synthesis, or as a result of ribosome stalling. Catalyzes the release of premature peptidyl moieties from peptidyl-tRNA molecules trapped in stalled 50S ribosomal subunits, and thus maintains levels of free tRNAs and 50S ribosomes. This chain is Peptidyl-tRNA hydrolase, found in Bacillus cytotoxicus (strain DSM 22905 / CIP 110041 / 391-98 / NVH 391-98).